The primary structure comprises 159 residues: 2-C-methyl-D-erythritol 2,4-cyclodiphosphate synthase (159 aa).

Residues aspartate 10 and histidine 12 each contribute to the a divalent metal cation site. 4-CDP-2-C-methyl-D-erythritol 2-phosphate contacts are provided by residues 10–12 and 36–37; these read DVH and HS. Residue histidine 44 coordinates a divalent metal cation. 4-CDP-2-C-methyl-D-erythritol 2-phosphate-binding positions include 58–60, 134–137, phenylalanine 141, and arginine 144; these read DIG and TTSE.

This sequence belongs to the IspF family. In terms of assembly, homotrimer. A divalent metal cation serves as cofactor.

The catalysed reaction is 4-CDP-2-C-methyl-D-erythritol 2-phosphate = 2-C-methyl-D-erythritol 2,4-cyclic diphosphate + CMP. The protein operates within isoprenoid biosynthesis; isopentenyl diphosphate biosynthesis via DXP pathway; isopentenyl diphosphate from 1-deoxy-D-xylulose 5-phosphate: step 4/6. Involved in the biosynthesis of isopentenyl diphosphate (IPP) and dimethylallyl diphosphate (DMAPP), two major building blocks of isoprenoid compounds. Catalyzes the conversion of 4-diphosphocytidyl-2-C-methyl-D-erythritol 2-phosphate (CDP-ME2P) to 2-C-methyl-D-erythritol 2,4-cyclodiphosphate (ME-CPP) with a corresponding release of cytidine 5-monophosphate (CMP). The protein is 2-C-methyl-D-erythritol 2,4-cyclodiphosphate synthase of Cereibacter sphaeroides (strain ATCC 17029 / ATH 2.4.9) (Rhodobacter sphaeroides).